We begin with the raw amino-acid sequence, 304 residues long: Probable actin-related protein 2/3 complex subunit 2 (304 aa).

Belongs to the ARPC2 family. In terms of assembly, component of the Arp2/3 complex.

The protein localises to the cytoplasm. It is found in the cytoskeleton. Functions as actin-binding component of the Arp2/3 complex which is involved in regulation of actin polymerization and together with an activating nucleation-promoting factor (NPF) mediates the formation of branched actin networks. Seems to contact the mother actin filament. This is Probable actin-related protein 2/3 complex subunit 2 (Arc-p34) from Anopheles gambiae (African malaria mosquito).